The chain runs to 446 residues: Na(+)-translocating NADH-quinone reductase subunit A (446 aa).

It belongs to the NqrA family. Composed of six subunits; NqrA, NqrB, NqrC, NqrD, NqrE and NqrF.

The catalysed reaction is a ubiquinone + n Na(+)(in) + NADH + H(+) = a ubiquinol + n Na(+)(out) + NAD(+). Functionally, NQR complex catalyzes the reduction of ubiquinone-1 to ubiquinol by two successive reactions, coupled with the transport of Na(+) ions from the cytoplasm to the periplasm. NqrA to NqrE are probably involved in the second step, the conversion of ubisemiquinone to ubiquinol. The sequence is that of Na(+)-translocating NADH-quinone reductase subunit A from Histophilus somni (strain 2336) (Haemophilus somnus).